We begin with the raw amino-acid sequence, 382 residues long: Lipid-A-disaccharide synthase (382 aa).

The protein belongs to the LpxB family.

The enzyme catalyses 2-N,3-O-bis[(3R)-3-hydroxytetradecanoyl]-alpha-D-glucosaminyl 1-phosphate + UDP-2-N,3-O-bis[(3R)-3-hydroxytetradecanoyl]-alpha-D-glucosamine = lipid A disaccharide (E. coli) + UDP + H(+). It carries out the reaction a lipid X + a UDP-2-N,3-O-bis[(3R)-3-hydroxyacyl]-alpha-D-glucosamine = a lipid A disaccharide + UDP + H(+). It functions in the pathway glycolipid biosynthesis; lipid IV(A) biosynthesis; lipid IV(A) from (3R)-3-hydroxytetradecanoyl-[acyl-carrier-protein] and UDP-N-acetyl-alpha-D-glucosamine: step 5/6. In terms of biological role, condensation of UDP-2,3-diacylglucosamine and 2,3-diacylglucosamine-1-phosphate to form lipid A disaccharide, a precursor of lipid A, a phosphorylated glycolipid that anchors the lipopolysaccharide to the outer membrane of the cell. The polypeptide is Lipid-A-disaccharide synthase (Escherichia coli (strain ATCC 8739 / DSM 1576 / NBRC 3972 / NCIMB 8545 / WDCM 00012 / Crooks)).